The following is a 379-amino-acid chain: MKIATLAVVSAFAATAIAGPIRPDGVGNDKFLIELGPGETQWVTKQQKHEMRAYINSIYKAGQGFVDITDEFGTDFTTAEVVPANYPKSALHAAVVNPMIAGLSKENLMRDLNTLVKFNNRYYESPTGVESATWVFNEVQKIIQASGVKGAKVEKFTNKFKQFNVIATIPGASKNTVIVGAHQDSINQKDPMKGRAPGADDNGSGTVVVLEAFRNVLKSKAIQAANATNTLEFHWYAGEEGGLLGSNNIFKKYKADGRKVKAMLNQDLTGFTKKGNPEQFGLITDNTNAELNEFCKTIVAKYAALKIVEAKCGYACSDHASAHRNGFPSSFIAETNFRNTNPYLHTADDVIANLDFNHMLEHAKVVVGFMGELAMTPNL.

Positions 1–18 (MKIATLAVVSAFAATAIA) are cleaved as a signal peptide. 2 residues coordinate Zn(2+): histidine 182 and aspartate 201. Asparagine 202 and asparagine 226 each carry an N-linked (GlcNAc...) asparagine glycan. 2 residues coordinate Zn(2+): glutamate 240 and aspartate 267. The cysteines at positions 312 and 316 are disulfide-linked. Histidine 345 lines the Zn(2+) pocket.

Belongs to the peptidase M28 family. M28E subfamily. Monomer. Requires Zn(2+) as cofactor.

The protein localises to the secreted. Probable extracellular aminopeptidase which contributes to pathogenicity. This is Probable leucine aminopeptidase TRV_05286 from Trichophyton verrucosum (strain HKI 0517).